The sequence spans 875 residues: Ubiquitin-protein ligase E3A (875 aa).

The C4-type; atypical zinc finger occupies 44–83; sequence CGNEACTNEFCASCPTFLRMDNNAAAIKALELYKINAKLC. A compositionally biased stretch (basic and acidic residues) spans 175–186; sequence KEELKSLQAKDE. Positions 175–226 are disordered; sequence KEELKSLQAKDEDKDEDEKEKAACSAAAMEEDSEASSSRIGDSSQGDNNLQK. A compositionally biased stretch (polar residues) spans 213-225; the sequence is RIGDSSQGDNNLQ. At Ser-218 the chain carries Phosphoserine. The interval 401 to 418 is E6-binding; it reads IPESSELTLQELLGEERR. Positions 418–517 are interaction with HCV core protein; sequence RNKKGPRVDP…TVLYSLVQGQ (100 aa). Phosphotyrosine; by ABL1 is present on Tyr-659. One can recognise an HECT domain in the interval 776-875; that stretch reads YDGGYTRDSV…ITYAKGFGML (100 aa). The active-site Glycyl thioester intermediate is Cys-843.

As to quaternary structure, the active form is probably a homotrimer. Binds UBQLN1 and UBQLN2. Interacts with the 26S proteasome. Interacts with BPY2. Interacts with HIF1AN, MAPK6 and NEURL4; interaction with MAPK6 may be mediated by NEURL4. Interacts with the proteasomal subunit PSMD4. Interacts with ESR1 and WBP2. Interacts with BMAL1. Interacts with ARC. (Microbial infection) Interacts with HCV core protein and targets it to degradation. In terms of assembly, (Microbial infection) Interacts with the E6 protein of the cancer-associated human papillomavirus types 16 and 18. The E6/E6-AP complex binds to and targets the p53/TP53 tumor-suppressor protein for ubiquitin-mediated proteolysis. Phosphorylation at Tyr-659 by ABL1 impairs E3 ligase activity and protects p53/TP53 from degradation in (HPV)-infected cells.

It localises to the cytoplasm. The protein resides in the nucleus. The enzyme catalyses S-ubiquitinyl-[E2 ubiquitin-conjugating enzyme]-L-cysteine + [acceptor protein]-L-lysine = [E2 ubiquitin-conjugating enzyme]-L-cysteine + N(6)-ubiquitinyl-[acceptor protein]-L-lysine.. It participates in protein modification; protein ubiquitination. In terms of biological role, E3 ubiquitin-protein ligase which accepts ubiquitin from an E2 ubiquitin-conjugating enzyme in the form of a thioester and transfers it to its substrates. Several substrates have been identified including the BMAL1, ARC, LAMTOR1, RAD23A and RAD23B, MCM7 (which is involved in DNA replication), annexin A1, the PML tumor suppressor, and the cell cycle regulator CDKN1B. Additionally, may function as a cellular quality control ubiquitin ligase by helping the degradation of the cytoplasmic misfolded proteins. Finally, UBE3A also promotes its own degradation in vivo. Plays an important role in the regulation of the circadian clock: involved in the ubiquitination of the core clock component BMAL1, leading to its proteasomal degradation. Acts as transcriptional coactivator of progesterone receptor PGR upon progesterone hormone activation. Acts as a regulator of synaptic development by mediating ubiquitination and degradation of ARC. Required for synaptic remodeling in neurons by mediating ubiquitination and degradation of LAMTOR1, thereby limiting mTORC1 signaling and activity-dependent synaptic remodeling. Synergizes with WBP2 in enhancing PGR activity. Its function is as follows. (Microbial infection) Catalyzes the high-risk human papilloma virus E6-mediated ubiquitination of p53/TP53, contributing to the neoplastic progression of cells infected by these viruses. The protein is Ubiquitin-protein ligase E3A of Homo sapiens (Human).